Consider the following 815-residue polypeptide: MAGGHCGSFPAAAAGSGEIVQLNVGGTRFSTSRQTLMWIPDSFFSSLLSGRISTLRDETGAIFIDRDPAAFAPILNFLRTKELDLRGVSINVLRHEAEFYGITPLVRRLLLCEELERSSCGSVLFHGYLPPPGIPSRKINNTVRSADSRNGLNSTEGEARGNGTQPVLSGTGEETVRLGFPVDPRKVLIVAGHHNWIVAAYAHFAVCYRIKESSGWQQVFTSPYLDWTIERVALNAKVVGGPHGDKDKMVAVASESSIILWSVQDGGSGSEIGVFSLGVPVDALFFIGNQLVATSHTGKVGVWNAVTQHWQVQDVVPITSYDTAGSFLLLGCNNGSIYYIDMQKFPLRMKDNDLLVTELYHDPSNDAITALSVYLTPKTSVSGNWIEIAYGTSSGAVRVIVQHPETVGSGPQLFQTFTVHRSPVTKIMLSEKHLVSVCADNNHVRTWTVTRFRGMISTQPGSTPLASFKILSLEETESHGSYSSGNDIGPFGERDDQQVFIQKVVPITNKLFVRLSSTGKRICEIQAVDCTTISSFTVRECEGSSRMGSRPRRYLFTGHTNGSIQMWDLTTAMDMVNKSEDKDVGGPTEEELLKLLDQCDLSTSRCATPNISPATSVVQHSHLRESNSSLQLQHHDTTHEAATYGSMRPYRESPLLARARRTESFHSYRDFQTINLNRNVERAVPENGNLGPIQAEVKGATGECNISERKSPGVEIKSLRELDSGLEVHKIAEGFSESKKRSSEDENENKIEFRKKGGFEGGGFLGRKKVPYLASSPSTSDGGTDSPGTASPSPTKTTPSPRHKKSDSSGQEYSL.

The BTB domain maps to 18–87 (EIVQLNVGGT…LRTKELDLRG (70 aa)). Residues 139–168 (INNTVRSADSRNGLNSTEGEARGNGTQPVL) show a composition bias toward polar residues. Residues 139-170 (INNTVRSADSRNGLNSTEGEARGNGTQPVLSG) form a disordered region. WD repeat units follow at residues 174–218 (ETVR…GWQQ), 224–263 (YLDW…LWSV), 270–305 (SEIG…VWNA), 310–342 (WQVQ…YIDM), 354–404 (LLVT…VQHP), 412–449 (QLFQ…TWTV), 457–504 (STQP…IQKV), and 510–569 (KLFV…MWDL). Residues 512–815 (FVRLSSTGKR…SDSSGQEYSL (304 aa)) are interaction with HCN3. 3 positions are modified to phosphoserine: serine 604, serine 664, and serine 711. Over residues 736–758 (SESKKRSSEDENENKIEFRKKGG) the composition is skewed to basic and acidic residues. The tract at residues 736–815 (SESKKRSSED…SDSSGQEYSL (80 aa)) is disordered. The span at 774-800 (ASSPSTSDGGTDSPGTASPSPTKTTPS) shows a compositional bias: low complexity. Serine 793 carries the phosphoserine modification.

The protein belongs to the KCTD3 family. As to quaternary structure, interacts with HCN3. As to expression, broadly expressed in normal tissues.

It is found in the cell membrane. Functionally, accessory subunit of potassium/sodium hyperpolarization-activated cyclic nucleotide-gated channel 3 (HCN3) up-regulating its cell-surface expression and current density without affecting its voltage dependence and kinetics. This is BTB/POZ domain-containing protein KCTD3 (KCTD3) from Homo sapiens (Human).